We begin with the raw amino-acid sequence, 3230 residues long: Helicase SRCAP (3230 aa).

Residues 1–71 (MQSSPSPAHP…GPPDGATVPL (71 aa)) are disordered. A compositionally biased stretch (low complexity) spans 26–41 (GSNPVSPASSSSPASS). An HSA domain is found at 124–196 (LPKVPEPPRP…EQAKLRRIAS (73 aa)). Disordered regions lie at residues 253 to 547 (QPLT…EEDD) and 559 to 581 (EEQS…LGPK). The span at 257-273 (SSKAGSSPCLGSSSAAS) shows a compositional bias: low complexity. Over residues 283 to 313 (DDEDGDFQPQEDEEEDDEETIEVEEQQEGND) the composition is skewed to acidic residues. Basic and acidic residues predominate over residues 315-329 (EAQRREIELLRREGE). The segment covering 337 to 356 (RSLPPQLLEGPSSPSQTPSS) has biased composition (low complexity). The segment covering 397–425 (DEDDEEFTANEEEAEDEEDTIAAEEQLEG) has biased composition (acidic residues). The span at 426-441 (EVDHAMELSELAREGE) shows a compositional bias: basic and acidic residues. 3 stretches are compositionally biased toward acidic residues: residues 462–490 (SEDE…EPPQ), 503–517 (RSED…EEET), and 524–533 (EESESEESED). Residues 630 to 795 (VTMYEKKLNG…WSLMHFLMPH (166 aa)) form the Helicase ATP-binding domain. Position 643 to 650 (643 to 650 (DEMGLGKT)) interacts with ATP. 3 disordered regions span residues 1017–1045 (APLG…PQVL), 1058–1125 (PPLI…PGSS), and 1138–1166 (TFPP…TPAP). Pro residues-rich tracts occupy residues 1018–1030 (PLGP…PPGP) and 1058–1076 (PPLI…PPLQ). Over residues 1093–1107 (LSGTSRPPTPTLSLK) the composition is skewed to low complexity. The segment covering 1108-1123 (PTPPAPVRLSPAPPPG) has biased composition (pro residues). Residues 1138 to 1160 (TFPPAAATTTSTTTATATTTAVP) are compositionally biased toward low complexity. Ser1172 is modified (phosphoserine). Disordered regions lie at residues 1320 to 1366 (GLTP…APMP), 1406 to 1425 (SLPG…PLAS), 1629 to 1760 (VPVM…ASPV), and 1839 to 1893 (SRLP…EEKR). Residues 1323–1336 (PVPPLAPAPRPPSS) are compositionally biased toward pro residues. Low complexity predominate over residues 1337 to 1360 (GLPAVLNPRPTLTPGRLPTPTLGT). The segment covering 1675–1691 (PASTQTLALAPALAPTL) has biased composition (low complexity). A compositionally biased stretch (polar residues) spans 1692 to 1733 (GGSSPSQTLSLGTGNPQGPFPTQTLSLTPASSLVPTPAQTLS). The span at 1750 to 1760 (PAPPLAPASPV) shows a compositional bias: pro residues. One can recognise a Helicase C-terminal domain in the interval 2044–2197 (KLQTLAVLLR…DMAIEGGNFT (154 aa)). Disordered regions lie at residues 2214 to 2233 (LEEP…EETV), 2271 to 2298 (FNEN…MSRA), 2327 to 2453 (VSRE…APAA), 2564 to 2583 (LELA…VPPK), 2598 to 3081 (KNLS…GRKS), and 3095 to 3230 (DLAD…KAKT). Residues 2215–2225 (EEPSSSSVPSA) are compositionally biased toward low complexity. Composition is skewed to basic and acidic residues over residues 2284–2298 (EAGR…MSRA), 2327–2358 (VSRE…RLPQ), and 2386–2403 (KAPE…RGAR). Residues 2438–2448 (RPAPRPRPTPA) are compositionally biased toward pro residues. 2 stretches are compositionally biased toward low complexity: residues 2564–2579 (LELA…SLSL) and 2600–2611 (LSLTPSAPSLTL). The segment covering 2669-2679 (EADRTSEELTE) has biased composition (basic and acidic residues). Over residues 2694-2712 (VTAEVAAPSTSSSATSSPE) the composition is skewed to low complexity. Residues 2782–2794 (SETSASPGSPSVR) show a composition bias toward polar residues. Residues 2807–2817 (GPCEAAPSSSL) are compositionally biased toward low complexity. Positions 2856 to 2868 (VKRRRGRPPKKNR) are enriched in basic residues. The a.T hook 1 DNA-binding region spans 2857–2869 (KRRRGRPPKKNRS). Positions 2913 to 2926 (IPGPQPLGPQPVHR) are enriched in pro residues. The a.T hook 2 DNA-binding region spans 2936–2948 (KRRRGRPPKARDL). Residues 2953–2965 (TISSAGDGNSESR) show a composition bias toward polar residues. Residues 2967 to 2982 (QPPPHPSPLTPLPPLL) are compositionally biased toward pro residues. Residues 2983–3002 (VCPTATVANTVTTVTISTSP) are compositionally biased toward low complexity. The a.T hook 3 DNA-binding region spans 3004–3016 (KRKRGRPPKNPPS). Pro residues predominate over residues 3011–3020 (PKNPPSPRPS). Residues 3044–3053 (PQGQGESEGS) are compositionally biased toward low complexity. A compositionally biased stretch (acidic residues) spans 3168–3184 (SVEESEAEASGEEEEGD).

Belongs to the SNF2/RAD54 helicase family. SWR1 subfamily. Interacts with CREBBP and EP300. May be part of a complex containing SRCAP, CREBBP, CARM1 and GRIP1. Component of the chromatin-remodeling SRCAP complex composed of at least SRCAP, DMAP1, RUVBL1, RUVBL2, ACTL6A, YEATS4, VPS72, ACTR6 and ZNHIT1. Component of a NuA4-related complex which contains EP400, TRRAP/PAF400, SRCAP, BRD8/SMAP, EPC1, DMAP1/DNMAP1, RUVBL1/TIP49, RUVBL2, actin, ACTL6A/BAF53A, VPS72 and YEATS4/GAS41. As to quaternary structure, (Microbial infection) Interacts with hepatitis C virus (HCV) NS5A. In terms of assembly, (Microbial infection) Interacts with human adenovirus 2 DBP.

It is found in the nucleus. Catalytic component of the SRCAP complex which mediates the ATP-dependent exchange of histone H2AZ/H2B dimers for nucleosomal H2A/H2B, leading to transcriptional regulation of selected genes by chromatin remodeling. Acts as a coactivator for CREB-mediated transcription, steroid receptor-mediated transcription, and Notch-mediated transcription. The chain is Helicase SRCAP (SRCAP) from Homo sapiens (Human).